Reading from the N-terminus, the 434-residue chain is Methylenetetrahydrofolate--tRNA-(uracil-5-)-methyltransferase TrmFO (434 aa).

10-15 (GAGLAG) serves as a coordination point for FAD.

Belongs to the MnmG family. TrmFO subfamily. The cofactor is FAD.

It is found in the cytoplasm. The catalysed reaction is uridine(54) in tRNA + (6R)-5,10-methylene-5,6,7,8-tetrahydrofolate + NADH + H(+) = 5-methyluridine(54) in tRNA + (6S)-5,6,7,8-tetrahydrofolate + NAD(+). It catalyses the reaction uridine(54) in tRNA + (6R)-5,10-methylene-5,6,7,8-tetrahydrofolate + NADPH + H(+) = 5-methyluridine(54) in tRNA + (6S)-5,6,7,8-tetrahydrofolate + NADP(+). Its function is as follows. Catalyzes the folate-dependent formation of 5-methyl-uridine at position 54 (M-5-U54) in all tRNAs. The sequence is that of Methylenetetrahydrofolate--tRNA-(uracil-5-)-methyltransferase TrmFO from Bacillus anthracis (strain A0248).